We begin with the raw amino-acid sequence, 345 residues long: MAQRGGARRPRGDRERLGSRLRALRPGREPRQSEPPAQRGPPPSGRPPARSTASGHDRPTRGAAAGARRPRMKKKTRRRSTRSEELTRSEELTLSEEATWSEEATQSEEATQGEEMNRSQEVTRDEESTRSEEVTREEMAAAGLTVTVTHSNEKHDLHVTSQQGSSEPVVQDLAQVVEEVIGVPQSFQKLIFKGKSLKEMETPLSALGIQDGCRVMLIGKKNSPQEEVELKKLKHLEKSVEKIADQLEELNKELTGIQQGFLPKDLQAEALCKLDRRVKATIEQFMKILEEIDTLILPENFKDSRLKRKGLVKKVQAFLAECDTVEQNICQETERLQSTNFALAE.

The interval 1-137 (MAQRGGARRP…STRSEEVTRE (137 aa)) is disordered. The segment covering 68 to 80 (RRPRMKKKTRRRS) has biased composition (basic residues). Over residues 81-91 (TRSEELTRSEE) the composition is skewed to basic and acidic residues. Residues 95–114 (SEEATWSEEATQSEEATQGE) are compositionally biased toward low complexity. Tandem repeats lie at residues 96–101 (EEATWS), 102–107 (EEATQS), 108–113 (EEATQG), 114–119 (EEMNRS), 120–125 (QEVTRD), 126–131 (EESTRS), and 132–137 (EEVTRE). Residues 96–137 (EEATWSEEATQSEEATQGEEMNRSQEVTRDEESTRSEEVTRE) form a 7 X 6 AA tandem repeat of E-E-X(4) region. Positions 115 to 137 (EMNRSQEVTRDEESTRSEEVTRE) are enriched in basic and acidic residues. The Ubiquitin-like domain maps to 144-224 (LTVTVTHSNE…VMLIGKKNSP (81 aa)). Positions 172-219 (DLAQVVEEVIGVPQSFQKLIFKGKSLKEMETPLSALGIQDGCRVMLIG) are interaction with HSPA8. The interaction with PPP1R15A stretch occupies residues 216–345 (MLIGKKNSPQ…LQSTNFALAE (130 aa)). The residue at position 223 (Ser223) is a Phosphoserine. Positions 246–326 (QLEELNKELT…AFLAECDTVE (81 aa)) constitute a BAG domain.

As to quaternary structure, homodimer. Forms a heteromeric complex with HSP70/HSC70. Binds to the ATPase domain of HSP/HSC70 chaperones. Isoform 1, isoform 3 and isoform 4 but not isoform 2 interact with HSPA8/HSC70. Interacts with NR3C1. Interacts with the N-terminal region of MAPRE2. Interacts with PPP1R15A. Interacts with BCL2 in an ATP-dependent manner. Isoform 2 does not interact with BCL2. Interacts with SIAH1. Interacts with HSPA8 (via NBD). Interacts with HSPA1A (via NBD) and HSPA1B (via NBD). Interacts with SIAH2. Interacts with ESR1; the interaction is promoted in the absence of estradiol (17-beta-estradiol/E2). In terms of processing, ubiquitinated; mediated by SIAH1 or SIAH2 and leading to its subsequent proteasomal degradation. As to expression, isoform 4 is the most abundantly expressed isoform. It is ubiquitously expressed throughout most tissues, except the liver, colon, breast and uterine myometrium. Isoform 1 is expressed in the ovary and testis. Isoform 4 is expressed in several types of tumor cell lines, and at consistently high levels in leukemia and lymphoma cell lines. Isoform 1 is expressed in the prostate, breast and leukemia cell lines. Isoform 3 is the least abundant isoform in tumor cell lines (at protein level).

The protein localises to the nucleus. It localises to the cytoplasm. Functionally, co-chaperone for HSP70 and HSC70 chaperone proteins. Acts as a nucleotide-exchange factor (NEF) promoting the release of ADP from the HSP70 and HSC70 proteins thereby triggering client/substrate protein release. Nucleotide release is mediated via its binding to the nucleotide-binding domain (NBD) of HSPA8/HSC70 where as the substrate release is mediated via its binding to the substrate-binding domain (SBD) of HSPA8/HSC70. Inhibits the pro-apoptotic function of PPP1R15A, and has anti-apoptotic activity. Markedly increases the anti-cell death function of BCL2 induced by various stimuli. Involved in the STUB1-mediated proteasomal degradation of ESR1 in response to age-related circulating estradiol (17-beta-estradiol/E2) decline, thereby promotes neuronal apoptosis in response to ischemic reperfusion injury. This Homo sapiens (Human) protein is BAG family molecular chaperone regulator 1 (BAG1).